Here is a 535-residue protein sequence, read N- to C-terminus: Arylsulfatase K (535 aa).

An N-terminal signal peptide occupies residues 1–21; that stretch reads MGSGGPLLLLRGLLLVGAAYC. Residues Asp41 and Cys81 each coordinate Ca(2+). Cys81 functions as the Nucleophile in the catalytic mechanism. Cys81 is subject to 3-oxoalanine (Cys). A substrate-binding site is contributed by Lys129. Asn194 carries N-linked (GlcNAc...) asparagine glycosylation. Position 252 (His252) interacts with substrate. An N-linked (GlcNAc...) asparagine glycan is attached at Asn263. Residues Asp314 and His315 each contribute to the Ca(2+) site. Asn376, Asn414, and Asn499 each carry an N-linked (GlcNAc...) asparagine glycan.

It belongs to the sulfatase family. It depends on Ca(2+) as a cofactor. The conversion to 3-oxoalanine (also known as C-formylglycine, FGly), of a serine or cysteine residue in prokaryotes and of a cysteine residue in eukaryotes, is critical for catalytic activity.

It localises to the secreted. It is found in the lysosome. The catalysed reaction is an aryl sulfate + H2O = a phenol + sulfate + H(+). It carries out the reaction Hydrolysis of the 2-sulfate groups of the 2-O-sulfo-D-glucuronate residues of chondroitin sulfate, heparin and heparitin sulfate.. In terms of biological role, catalyzes the hydrolysis of pseudosubstrates such as p-nitrocatechol sulfate and p-nitrophenyl sulfate. Catalyzes the hydrolysis of the 2-sulfate groups of the 2-O-sulfo-D-glucuronate residues of chondroitin sulfate, heparin and heparitin sulfate. Acts selectively on 2-sulfoglucuronate and lacks activity against 2-sulfoiduronate. In Gallus gallus (Chicken), this protein is Arylsulfatase K (ARSK).